Here is a 204-residue protein sequence, read N- to C-terminus: Imidazole glycerol phosphate synthase subunit HisH (204 aa).

A Glutamine amidotransferase type-1 domain is found at 5-204 (KVVIIDTGCA…AKLIQNFLEL (200 aa)). Cys-80 functions as the Nucleophile in the catalytic mechanism. Catalysis depends on residues His-186 and Glu-188.

Heterodimer of HisH and HisF.

It localises to the cytoplasm. It carries out the reaction 5-[(5-phospho-1-deoxy-D-ribulos-1-ylimino)methylamino]-1-(5-phospho-beta-D-ribosyl)imidazole-4-carboxamide + L-glutamine = D-erythro-1-(imidazol-4-yl)glycerol 3-phosphate + 5-amino-1-(5-phospho-beta-D-ribosyl)imidazole-4-carboxamide + L-glutamate + H(+). It catalyses the reaction L-glutamine + H2O = L-glutamate + NH4(+). It functions in the pathway amino-acid biosynthesis; L-histidine biosynthesis; L-histidine from 5-phospho-alpha-D-ribose 1-diphosphate: step 5/9. Its function is as follows. IGPS catalyzes the conversion of PRFAR and glutamine to IGP, AICAR and glutamate. The HisH subunit catalyzes the hydrolysis of glutamine to glutamate and ammonia as part of the synthesis of IGP and AICAR. The resulting ammonia molecule is channeled to the active site of HisF. The polypeptide is Imidazole glycerol phosphate synthase subunit HisH (Vibrio parahaemolyticus serotype O3:K6 (strain RIMD 2210633)).